Here is a 374-residue protein sequence, read N- to C-terminus: Type IV secretion system protein PtlG (374 aa).

A helical membrane pass occupies residues 38–56 (WMFALVAVALSCLLATGIW). The tract at residues 86–117 (HPREPEPAPLPDMPAAPDPILPQPRPAPPVPP) is disordered. Residues 92–117 (PAPLPDMPAAPDPILPQPRPAPPVPP) show a composition bias toward pro residues.

The protein belongs to the TrbI/VirB10 family.

It is found in the cell membrane. Its function is as follows. Component of the type IV secretion system ptl required for secretion of assembled pertussis toxin (PTX) through the outer membrane. In Bordetella pertussis (strain Tohama I / ATCC BAA-589 / NCTC 13251), this protein is Type IV secretion system protein PtlG (ptlG).